A 330-amino-acid polypeptide reads, in one-letter code: DNA-directed RNA polymerase subunit alpha (330 aa).

An alpha N-terminal domain (alpha-NTD) region spans residues 1–231 (MQTNLLKPKT…EQLAVFAQLE (231 aa)). The tract at residues 250–330 (FDPILLRPVD…SWPPAGLDKR (81 aa)) is alpha C-terminal domain (alpha-CTD).

Belongs to the RNA polymerase alpha chain family. As to quaternary structure, homodimer. The RNAP catalytic core consists of 2 alpha, 1 beta, 1 beta' and 1 omega subunit. When a sigma factor is associated with the core the holoenzyme is formed, which can initiate transcription.

The catalysed reaction is RNA(n) + a ribonucleoside 5'-triphosphate = RNA(n+1) + diphosphate. In terms of biological role, DNA-dependent RNA polymerase catalyzes the transcription of DNA into RNA using the four ribonucleoside triphosphates as substrates. This Polaromonas naphthalenivorans (strain CJ2) protein is DNA-directed RNA polymerase subunit alpha.